The sequence spans 975 residues: E3 ubiquitin-protein ligase NEDD4-like (975 aa).

Alanine 2 is modified (N-acetylalanine). One can recognise a C2 domain in the interval 4–126; it reads GLGEPVYGLS…TEDPTMERPY (123 aa). Disordered regions lie at residues 178 to 202, 244 to 272, and 285 to 312; these read DSNDSASQHQEELPPPPLPPGWEEK, AAHRRFRSRRHISEDLEPEPSEGGDVPEP, and DSLGLALPPPPASPGSRTSPQELSEELS. A WW 1 domain is found at 193–226; that stretch reads PPLPPGWEEKVDNLGRTYYVNHNNRTTQWHRPSL. Serine 312 is subject to Phosphoserine. Position 318 is a phosphothreonine (threonine 318). Phosphoserine; by WNK1 and WNK4 is present on serine 342. Disordered stretches follow at residues 349–393 and 424–496; these read EQGH…GWEE and GASG…KVTQ. Position 367 is a phosphothreonine; by SGK1 (threonine 367). The region spanning 385–418 is the WW 2 domain; it reads PGLPSGWEERKDAKGRTYYVNHNNRTTTWTRPIM. Residue serine 446 is modified to Phosphoserine. Serine 448 is subject to Phosphoserine; by PKA and SGK1. Serine 449 carries the phosphoserine; by WNK1 and WNK4 modification. Residues 460-471 show a composition bias toward basic and acidic residues; the sequence is GAKDSPVRRAVK. Serine 464, serine 475, serine 479, serine 483, and serine 487 each carry phosphoserine. WW domains lie at 497–530 and 548–581; these read SFLPPGWEMRIAPNGRPFFIDHNTKTTTWEDPRL and GPLPPGWEERIHLDGRTFYIDHNSKITQWEDPRL. Residues 640 to 974 enclose the HECT domain; that stretch reads RPDVLKARLW…VENAQGFEGV (335 aa). Cysteine 942 (glycyl thioester intermediate) is an active-site residue.

Interacts with UBE2E3. Interacts with NDFIP1; this interaction activates the E3 ubiquitin-protein ligase. Interacts with NDFIP2; this interaction activates the E3 ubiquitin-protein ligase. Interacts (via WW domains) with SCN1A. Interacts (via WW domains) with SCN2A. Interacts (via WW domains) with SCN3A. Interacts (via WW domains) with SCN5A. Interacts (via WW domains) with SCN8A. Interacts (via WW domains) with SCN9A. Interacts (via WW domains) with SCN10A. Interacts (via WW domains) with CLCN5. Interacts with SMAD2. Interacts with SMAD3. Interacts with SMAD6. Interacts with SMAD7. The phosphorylated form interacts with 14-3-3 proteins. Interacts with TNK2. Interacts with WNK1. Interacts with SGK1. Interacts (via C2 domain) with NPC2. Interacts with ARRDC4. Interacts with KCNQ1; promotes internalization of KCNQ1. Interacts (via domains WW1, 3 and 4) with USP36; the interaction inhibits ubiquitination of, at least, NTRK1, KCNQ2 and KCNQ3 by NEDD4L. Interacts with PRRG4 (via cytoplasmic domain). Interacts with LDLRAD3; the interaction is direct. Interacts with UBE2D2. Interacts with TTYH2 and TTYH3. In terms of assembly, (Microbial infection) Interacts with Epstein-Barr virus LMP2A. Post-translationally, phosphorylated by SGK1 or PKA; which impairs interaction with SCNN. Interaction with YWHAH inhibits dephosphorylation. In terms of processing, auto-ubiquitinated. Deubiquitinated by USP36, no effect on NEDD4L protein levels. Both proteins interact and regulate each other's ubiquitination levels. As to expression, ubiquitously expressed, with highest levels in prostate, pancreas, and kidney. Expressed in melanocytes.

It is found in the cytoplasm. The protein resides in the golgi apparatus. The protein localises to the endosome. Its subcellular location is the multivesicular body. It catalyses the reaction S-ubiquitinyl-[E2 ubiquitin-conjugating enzyme]-L-cysteine + [acceptor protein]-L-lysine = [E2 ubiquitin-conjugating enzyme]-L-cysteine + N(6)-ubiquitinyl-[acceptor protein]-L-lysine.. It carries out the reaction [E2 ubiquitin-conjugating enzyme]-S-ubiquitinyl-L-cysteine + [acceptor protein]-L-cysteine = [E2 ubiquitin-conjugating enzyme]-L-cysteine + [acceptor protein]-S-ubiquitinyl-L-cysteine.. Its pathway is protein modification; protein ubiquitination. With respect to regulation, activated by NDFIP1- and NDFIP2-binding. E3 ubiquitin-protein ligase that mediates the polyubiquitination of lysine and cysteine residues on target proteins and is thereby implicated in the regulation of various signaling pathways including autophagy, innate immunity or DNA repair. Inhibits TGF-beta signaling by triggering SMAD2 and TGFBR1 ubiquitination and proteasome-dependent degradation. Downregulates autophagy and cell growth by ubiquitinating and reducing cellular ULK1 or ASCT2 levels. Promotes ubiquitination and internalization of various plasma membrane channels such as ENaC, SCN2A/Nav1.2, SCN3A/Nav1.3, SCN5A/Nav1.5, SCN9A/Nav1.7, SCN10A/Nav1.8, KCNA3/Kv1.3, KCNH2, EAAT1, KCNQ2/Kv7.2, KCNQ3/Kv7.3 or CLC5. Promotes ubiquitination and degradation of SGK1 and TNK2. Ubiquitinates BRAT1 and this ubiquitination is enhanced in the presence of NDFIP1. Plays a role in dendrite formation by melanocytes. Involved in the regulation of TOR signaling. Ubiquitinates and regulates protein levels of NTRK1 once this one is activated by NGF. Plays a role in antiviral innate immunity by catalyzing 'Lys-29'-linked cysteine ubiquitination of TRAF3, resulting in enhanced 'Lys-48' and 'Lys-63'-linked ubiquitination of TRAF3. Ubiquitinates TTYH2 and TTYH3 and regulates protein levels of TTYH2. This chain is E3 ubiquitin-protein ligase NEDD4-like, found in Homo sapiens (Human).